We begin with the raw amino-acid sequence, 562 residues long: Protein wntless (562 aa).

At 1–13 (MSGTILENLSGRK) the chain is on the cytoplasmic side. The helical transmembrane segment at 14-34 (LSILVGSLLLCQVLCFLLGGL) threads the bilayer. Residues 35-239 (YAPVPAGHTN…AIHQNGGFTH (205 aa)) are Lumenal-facing. N-linked (GlcNAc...) asparagine glycosylation is present at asparagine 58. The chain crosses the membrane as a helical span at residues 240-260 (VWLMLKTLLFPFVVGIMVWFW). Over 261–270 (RRVHLLQRSP) the chain is Cytoplasmic. Residues 271–291 (ALLEYMLLYLGGALTFLNLPL) form a helical membrane-spanning segment. The Lumenal segment spans residues 292 to 311 (EYLSLTIEMPYMLLLSDIRQ). Residues 312–332 (GIFYAMLLSFWLVFAGEHMLI) traverse the membrane as a helical segment. Over 333 to 344 (QDSHNKSTIRSR) the chain is Cytoplasmic. The helical transmembrane segment at 345-365 (YWKHLSAVVVGCISLFVFDIS) threads the bilayer. Topologically, residues 366-386 (ERGVQLRNPFYSIWTTPLGAK) are lumenal. The helical transmembrane segment at 387–407 (VAMSFILLAGVSAAVYFLFLC) threads the bilayer. At 408 to 441 (YMISKVFKNIGDKRTSLPSMSQARRLHYEGLIYR) the chain is on the cytoplasmic side. A helical membrane pass occupies residues 442–462 (FKFLMLATLLCAALTVTGFIM). At 463 to 482 (GQMAEGQWKWNDDVEIQLTS) the chain is on the lumenal side. The chain crosses the membrane as a helical span at residues 483 to 503 (AFLTGVYGMWNIYIFALLILY). Over 504-562 (APSHKQWPTMHHSDETTQSNENIVASAASEEIEFSNLPSDSNPSEISSLTSFTRKVAFE) the chain is Cytoplasmic. The interval 538–562 (SNLPSDSNPSEISSLTSFTRKVAFE) is disordered. Residues 539 to 556 (NLPSDSNPSEISSLTSFT) show a composition bias toward polar residues.

Belongs to the wntless family. Interacts with wg; in the Golgi. Interacts with Vps35, a component of the retromer complex; wls stability is regulated by Vps35.

It localises to the presynaptic cell membrane. The protein localises to the postsynaptic cell membrane. The protein resides in the cell membrane. Its subcellular location is the endoplasmic reticulum membrane. It is found in the endosome membrane. It localises to the golgi apparatus membrane. In terms of biological role, a segment polarity gene required for wingless (wg)-dependent patterning processes, acting in both wg-sending cells and wg-target cells. In non-neuronal cells wls directs wg secretion. The wls traffic loop encompasses the Golgi, the cell surface, an endocytic compartment and a retrograde route leading back to the Golgi, and involves clathrin-mediated endocytosis and the retromer complex (a conserved protein complex consisting of Vps35 and Vps26). In neuronal cells (the larval motorneuron NMJ), the wg signal moves across the synapse via the release of wls-containing exosome-like vesicles. Postsynaptic wls is required for the trafficking of fz2 through the fz2-interacting protein Grip. The sequence is that of Protein wntless from Drosophila persimilis (Fruit fly).